The chain runs to 124 residues: Ribonuclease pancreatic (124 aa).

Over residues 1 to 13 the composition is skewed to basic and acidic residues; it reads SETAAEKFERQHM. A disordered region spans residues 1–23; the sequence is SETAAEKFERQHMDSYSSSSSNS. Substrate-binding residues include K7 and R10. H12 (proton acceptor) is an active-site residue. 4 disulfides stabilise this stretch: C26/C84, C40/C95, C58/C110, and C65/C72. Residues 41–45, K66, and R85 contribute to the substrate site; that span reads KPVNT. H119 (proton donor) is an active-site residue.

Belongs to the pancreatic ribonuclease family. As to quaternary structure, monomer. Interacts with and forms tight 1:1 complexes with RNH1. Dimerization of two such complexes may occur. Interaction with RNH1 inhibits this protein. As to expression, pancreas.

Its subcellular location is the secreted. It catalyses the reaction an [RNA] containing cytidine + H2O = an [RNA]-3'-cytidine-3'-phosphate + a 5'-hydroxy-ribonucleotide-3'-[RNA].. The catalysed reaction is an [RNA] containing uridine + H2O = an [RNA]-3'-uridine-3'-phosphate + a 5'-hydroxy-ribonucleotide-3'-[RNA].. Functionally, endonuclease that catalyzes the cleavage of RNA on the 3' side of pyrimidine nucleotides. Acts on single-stranded and double-stranded RNA. The polypeptide is Ribonuclease pancreatic (RNASE1) (Camelus dromedarius (Dromedary)).